A 184-amino-acid polypeptide reads, in one-letter code: Ribosome-recycling factor (184 aa).

The disordered stretch occupies residues 137–158 (DSIKAKQKDGIPEDEAKRGQDE).

It belongs to the RRF family.

Its subcellular location is the cytoplasm. Responsible for the release of ribosomes from messenger RNA at the termination of protein biosynthesis. May increase the efficiency of translation by recycling ribosomes from one round of translation to another. The sequence is that of Ribosome-recycling factor from Desulforamulus reducens (strain ATCC BAA-1160 / DSM 100696 / MI-1) (Desulfotomaculum reducens).